Here is a 193-residue protein sequence, read N- to C-terminus: Lipopolysaccharide core heptose(II)-phosphate phosphatase (193 aa).

The first 25 residues, Met-1 to Ala-25, serve as a signal peptide directing secretion.

This sequence belongs to the phosphoglycerate mutase family. Ais subfamily.

Its subcellular location is the periplasm. Its pathway is bacterial outer membrane biogenesis; lipopolysaccharide metabolism. Functionally, catalyzes the dephosphorylation of heptose(II) of the outer membrane lipopolysaccharide core. In Escherichia fergusonii (strain ATCC 35469 / DSM 13698 / CCUG 18766 / IAM 14443 / JCM 21226 / LMG 7866 / NBRC 102419 / NCTC 12128 / CDC 0568-73), this protein is Lipopolysaccharide core heptose(II)-phosphate phosphatase.